The chain runs to 109 residues: MSKVFVIILVALMVAISIASAHRPPPNPRCLPGHSKCKYEPKKNSCCLGFQCTERNQCELVYPGHHGKPCGKDNLLGCILPPPTFKPRPCGKYNLKGCKPIRPRPHPHH.

The first 21 residues, 1–21 (MSKVFVIILVALMVAISIASA), serve as a signal peptide directing secretion. 5 disulfides stabilise this stretch: cysteine 30–cysteine 47, cysteine 37–cysteine 52, cysteine 46–cysteine 58, cysteine 70–cysteine 90, and cysteine 78–cysteine 98.

Expressed by the venom gland.

It is found in the secreted. This chain is Cysteine-rich venom protein 7, found in Pimpla hypochondriaca (Parasitoid wasp).